Consider the following 657-residue polypeptide: uncharacterized protein (657 aa).

A signal peptide spans 1 to 17 (MACVLACVAVLIGAASA).

This is an uncharacterized protein from Orgyia pseudotsugata (Douglas-fir tussock moth).